The primary structure comprises 393 residues: Protein TsgA (393 aa).

12 helical membrane passes run 11–31, 51–71, 78–98, 101–121, 134–154, 162–182, 206–226, 245–265, 273–293, 297–317, 332–352, and 361–381; these read WISF…GMVM, FLNA…EIVP, FGFL…SLAL, AAMF…TFLV, LLFT…IAAF, WYWV…LTFG, IGVL…LGFI, TLVS…SFIL, ILTV…TGTP, AWSI…IITL, FVLT…GPIV, and LLTA…LGFV.

This sequence belongs to the major facilitator superfamily. TsgA family.

It is found in the cell inner membrane. The protein is Protein TsgA of Escherichia coli O6:K15:H31 (strain 536 / UPEC).